Reading from the N-terminus, the 197-residue chain is Probable nicotinate-nucleotide adenylyltransferase (197 aa).

The protein belongs to the NadD family.

The catalysed reaction is nicotinate beta-D-ribonucleotide + ATP + H(+) = deamido-NAD(+) + diphosphate. Its pathway is cofactor biosynthesis; NAD(+) biosynthesis; deamido-NAD(+) from nicotinate D-ribonucleotide: step 1/1. In terms of biological role, catalyzes the reversible adenylation of nicotinate mononucleotide (NaMN) to nicotinic acid adenine dinucleotide (NaAD). The protein is Probable nicotinate-nucleotide adenylyltransferase of Pseudothermotoga lettingae (strain ATCC BAA-301 / DSM 14385 / NBRC 107922 / TMO) (Thermotoga lettingae).